We begin with the raw amino-acid sequence, 463 residues long: Glycine--tRNA ligase (463 aa).

The substrate site is built by arginine 98 and glutamate 174. ATP-binding positions include 206–208, 216–221, 290–291, and 334–337; these read RNE, FRTREF, EL, and GADR. A substrate-binding site is contributed by 221–225; the sequence is FEQME. 330–334 contacts substrate; sequence EPSLG.

Belongs to the class-II aminoacyl-tRNA synthetase family. In terms of assembly, homodimer.

The protein resides in the cytoplasm. It carries out the reaction tRNA(Gly) + glycine + ATP = glycyl-tRNA(Gly) + AMP + diphosphate. Functionally, catalyzes the attachment of glycine to tRNA(Gly). This is Glycine--tRNA ligase from Staphylococcus aureus (strain Mu50 / ATCC 700699).